Reading from the N-terminus, the 341-residue chain is Spore photoproduct lyase (341 aa).

Positions S76–R304 constitute a Radical SAM core domain. [4Fe-4S] cluster contacts are provided by C90, C94, and C97. The H-T-H motif DNA-binding region spans Q217 to A234.

It belongs to the radical SAM superfamily. SPL family. Monomer or homodimer. It depends on [4Fe-4S] cluster as a cofactor. S-adenosyl-L-methionine is required as a cofactor.

The enzyme catalyses (5R)-5,6-dihydro-5-(thymidin-7-yl)thymidine in DNA = a thymidine dimer in DNA. In terms of biological role, involved in repair of UV radiation-induced DNA damage during spore germination. Can repair thymine dimer 5-thyminyl-5,6-dihydrothymine (known as spore photoproduct (SP)) by in situ monomerization of SP to two thymines. This chain is Spore photoproduct lyase (splG), found in Geobacillus sp. (strain Y412MC61).